Reading from the N-terminus, the 276-residue chain is F-box/LRR-repeat protein 20 (276 aa).

Residues 22–68 form the F-box domain; that stretch reads AVINKKLPKELLLRIFSFLDVVTLCRCAQVSRAWNVLALDGSNWQRI. LRR repeat units lie at residues 74–100, 101–126, 127–152, 153–178, 179–204, 205–230, 231–256, and 257–276; these read QRDI…SLRG, CLGV…SLNG, CTKT…DLAS, CTSI…NISW, CDQV…FLKG, CTQL…NLQT, CLQI…CASG, and CSNI…PRLR.

In terms of assembly, interacts with SKP1 and CUL1. In terms of tissue distribution, widely expressed, with highest expression in skeletal muscle, heart and brain.

It is found in the cytoplasm. Functionally, substrate-recognition component of the SCF (SKP1-CUL1-F-box protein)-type E3 ubiquitin ligase complex. Role in neural transmission. In Rattus norvegicus (Rat), this protein is F-box/LRR-repeat protein 20 (Fbxl20).